Here is an 80-residue protein sequence, read N- to C-terminus: UPF0154 protein SZO_03240 (80 aa).

The chain crosses the membrane as a helical span at residues 4–24 (AIWILLIIVALTAGLFGGIFI).

Belongs to the UPF0154 family.

The protein localises to the cell membrane. This Streptococcus equi subsp. zooepidemicus (strain H70) protein is UPF0154 protein SZO_03240.